The chain runs to 298 residues: tRNA dimethylallyltransferase 2 (298 aa).

10 to 17 (GPTASGKT) is a binding site for ATP. Position 12-17 (12-17 (TASGKT)) interacts with substrate. The tract at residues 35–38 (DSRQ) is interaction with substrate tRNA.

This sequence belongs to the IPP transferase family. As to quaternary structure, monomer. The cofactor is Mg(2+).

The enzyme catalyses adenosine(37) in tRNA + dimethylallyl diphosphate = N(6)-dimethylallyladenosine(37) in tRNA + diphosphate. Functionally, catalyzes the transfer of a dimethylallyl group onto the adenine at position 37 in tRNAs that read codons beginning with uridine, leading to the formation of N6-(dimethylallyl)adenosine (i(6)A). The chain is tRNA dimethylallyltransferase 2 from Syntrophotalea carbinolica (strain DSM 2380 / NBRC 103641 / GraBd1) (Pelobacter carbinolicus).